The following is a 124-amino-acid chain: MADDLKRFLYKKLPSVEGLHAIVVSDRDGVPVIKVANDNAPEHALRPGFLSTFALATDQGSKLGLSKNKSIICYYNTYQVVQFNRLPLVVSFIASSSANTGLIVSLEKELAPLFEELRQVVEVS.

The required for interaction with LAMTOR2 stretch occupies residues threonine 57–serine 70.

The protein belongs to the LAMTOR3 family. Part of the Ragulator complex composed of LAMTOR1, LAMTOR2, LAMTOR3, LAMTOR4 and LAMTOR5. LAMTOR4 and LAMTOR5 form a heterodimer that interacts, through LAMTOR1, with a LAMTOR2, LAMTOR3 heterodimer. Interacts with LAMTOR1 and LAMTOR2; the interaction is direct. The Ragulator complex interacts with both the mTORC1 complex and heterodimers constituted of the Rag GTPases RagA/RRAGA, RagB/RRAGB, RagC/RRAGC and RagD/RRAGD; regulated by amino acid availability. The Ragulator complex interacts with SLC38A9; the probable amino acid sensor. Component of the lysosomal folliculin complex (LFC), composed of FLCN, FNIP1 (or FNIP2), RagA/RRAGA or RagB/RRAGB GDP-bound, RagC/RRAGC or RagD/RRAGD GTP-bound, and Ragulator. Interacts with MAP2K1/MEK1 and MAPK2. Interacts with MORG1.

It localises to the late endosome membrane. In terms of biological role, as part of the Ragulator complex it is involved in amino acid sensing and activation of mTORC1, a signaling complex promoting cell growth in response to growth factors, energy levels, and amino acids. Activated by amino acids through a mechanism involving the lysosomal V-ATPase, the Ragulator plays a dual role for the small GTPases Rag (RagA/RRAGA, RagB/RRAGB, RagC/RRAGC and/or RagD/RRAGD): it (1) acts as a guanine nucleotide exchange factor (GEF), activating the small GTPases Rag and (2) mediates recruitment of Rag GTPases to the lysosome membrane. Activated Ragulator and Rag GTPases function as a scaffold recruiting mTORC1 to lysosomes where it is in turn activated. Adapter protein that enhances the efficiency of the MAP kinase cascade facilitating the activation of MAPK2. This is Ragulator complex protein LAMTOR3 from Homo sapiens (Human).